Reading from the N-terminus, the 1227-residue chain is DNA-directed RNA polymerase subunit beta' (1227 aa).

Zn(2+) is bound by residues Cys60, Cys62, Cys75, and Cys78. Mg(2+)-binding residues include Asp449, Asp451, and Asp453. Residues Cys847, Cys921, Cys928, and Cys931 each contribute to the Zn(2+) site.

It belongs to the RNA polymerase beta' chain family. In terms of assembly, the RNAP catalytic core consists of 2 alpha, 1 beta, 1 beta' and 1 omega subunit. When a sigma factor is associated with the core the holoenzyme is formed, which can initiate transcription. Mg(2+) is required as a cofactor. The cofactor is Zn(2+).

The enzyme catalyses RNA(n) + a ribonucleoside 5'-triphosphate = RNA(n+1) + diphosphate. DNA-dependent RNA polymerase catalyzes the transcription of DNA into RNA using the four ribonucleoside triphosphates as substrates. The polypeptide is DNA-directed RNA polymerase subunit beta' (Lysinibacillus sphaericus (strain C3-41)).